The chain runs to 284 residues: ATP synthase subunit beta, chloroplastic (284 aa).

It belongs to the ATPase alpha/beta chains family. F-type ATPases have 2 components, CF(1) - the catalytic core - and CF(0) - the membrane proton channel. CF(1) has five subunits: alpha(3), beta(3), gamma(1), delta(1), epsilon(1). CF(0) has four main subunits: a(1), b(1), b'(1) and c(9-12).

Its subcellular location is the plastid. It is found in the chloroplast thylakoid membrane. It carries out the reaction ATP + H2O + 4 H(+)(in) = ADP + phosphate + 5 H(+)(out). Produces ATP from ADP in the presence of a proton gradient across the membrane. The catalytic sites are hosted primarily by the beta subunits. The sequence is that of ATP synthase subunit beta, chloroplastic (atpB) from Asplenium nidus (Bird's nest fern).